The sequence spans 82 residues: Cytochrome c oxidase-assembly factor cox-23, mitochondrial (82 aa).

Positions 1-27 are disordered; sequence MAQAGSENKEPWNEETRAKFEGKSRSE. Residues 7 to 27 show a composition bias toward basic and acidic residues; the sequence is ENKEPWNEETRAKFEGKSRSE. The CHCH domain occupies 29–71; it reads LDPCQEAAQRSIRCLHRNQGDRTMCSDYFEAYRECKKQWIERR. 2 short sequence motifs (cx9C motif) span residues 32–42 and 53–63; these read CQEAAQRSIRC and CSDYFEAYREC. Cystine bridges form between C32–C63 and C42–C53.

This sequence belongs to the COX23 family.

It localises to the mitochondrion intermembrane space. Its function is as follows. Required for the assembly of cytochrome c oxidase. This Neurospora crassa (strain ATCC 24698 / 74-OR23-1A / CBS 708.71 / DSM 1257 / FGSC 987) protein is Cytochrome c oxidase-assembly factor cox-23, mitochondrial (cox-23).